Reading from the N-terminus, the 2435-residue chain is ATP-binding cassette sub-family A member 2 (2435 aa).

An N-linked (GlcNAc...) asparagine glycan is attached at Asn-14. 2 helical membrane passes run 22–42 (PWVL…LLGL) and 54–74 (AFYT…QSLC). Residues Asn-89, Asn-168, and Asn-173 are each glycosylated (N-linked (GlcNAc...) asparagine). Gln-271 bears the N5-methylglutamine mark. N-linked (GlcNAc...) asparagine glycans are attached at residues Asn-305, Asn-368, Asn-379, Asn-420, Asn-432, Asn-476, Asn-484, Asn-494, Asn-530, Asn-544, Asn-590, Asn-600, and Asn-628. The next 6 membrane-spanning stretches (helical) occupy residues 699–719 (FLFV…VYSV), 750–770 (VAWF…LTAI), 782–802 (VVII…FCFL), 813–833 (ASAC…YVAI), 857–877 (AFGL…GIQW), and 893–913 (LLAV…TWYI). An ABC transporter 1 domain is found at 990 to 1221 (VCVDKLTKVY…YGDGYRLTLV (232 aa)). Residue 1024–1031 (GHNGAGKT) coordinates ATP. Disordered stretches follow at residues 1223–1243 (RPAE…PGRA) and 1325–1357 (DQSL…GHAG). A phosphoserine mark is found at Ser-1238, Ser-1327, and Ser-1331. Residues 1333–1342 (ADVKESRKDV) show a composition bias toward basic and acidic residues. N-linked (GlcNAc...) asparagine glycosylation occurs at Asn-1408. Residues 1456–1476 (ALFSQILLPAFFVCVAMTVAL) traverse the membrane as a helical segment. N-linked (GlcNAc...) asparagine glycans are attached at residues Asn-1496, Asn-1549, and Asn-1557. The interval 1586-1610 (SNFVPPPPSPAPSDSPASPDEDLQA) is disordered. Residues 1589–1598 (VPPPPSPAPS) show a composition bias toward pro residues. N-linked (GlcNAc...) asparagine glycans are attached at residues Asn-1612, Asn-1677, and Asn-1775. A run of 5 helical transmembrane segments spans residues 1792 to 1812 (VVIA…FVVF), 1841 to 1861 (VWDM…LFVF), 1872 to 1892 (FPAV…IMYP), 1905 to 1925 (VFLI…TFLL), and 1991 to 2011 (GLVA…MCQY). Residues 2050–2285 (VKIENLTKVY…FGDGYMITVR (236 aa)) enclose the ABC transporter 2 domain. Residue Asn-2054 is glycosylated (N-linked (GlcNAc...) asparagine). An ATP-binding site is contributed by 2087-2094 (GVNGAGKT). A Phosphothreonine modification is found at Thr-2412.

The protein belongs to the ABC transporter superfamily. ABCA family. In terms of processing, methylated at Gln-271 by N6AMT1. As to expression, highly expressed in the brain,peripheral blood leukocytes and ovary, whereas lower levels of expression is observed in kidney and liver. In terms of tissue distribution, weakly expressed in brain and highly in peripheral blood leukocytes.

It localises to the endosome membrane. The protein resides in the lysosome membrane. Its function is as follows. Probable lipid transporter that modulates cholesterol sequestration in the late endosome/lysosome by regulating the intracellular sphingolipid metabolism, in turn participates in cholesterol homeostasis. May alter the transbilayer distribution of ceramide in the intraluminal membrane lipid bilayer, favoring its retention in the outer leaflet that results in increased acid ceramidase activity in the late endosome/lysosome, facilitating ceramide deacylation to sphingosine leading to the sequestration of free cholesterol in lysosomes. In addition regulates amyloid-beta production either by activating a signaling pathway that regulates amyloid precursor protein transcription through the modulation of sphingolipid metabolism or through its role in gamma-secretase processing of APP. May play a role in myelin formation. The sequence is that of ATP-binding cassette sub-family A member 2 from Homo sapiens (Human).